The primary structure comprises 837 residues: Histone acetyltransferase KAT2A (837 aa).

Positions 1–99 (MAEPSQAPTP…RKAQVRGLPR (99 aa)) are disordered. A2 carries the post-translational modification N-acetylalanine. Positions 7–51 (APTPAPAAQPRPLQSPAPAPTPTPAPSPASAPIPTPTPAPAPAPA) are enriched in pro residues. The span at 58-74 (TGTGGPGVGSGGAGSGG) shows a compositional bias: gly residues. The span at 75–87 (DPARPGLSQQQRA) shows a compositional bias: low complexity. Over residues 88 to 99 (SQRKAQVRGLPR) the composition is skewed to basic residues. S307 is subject to Phosphoserine. The disordered stretch occupies residues 407–434 (FSPSMGGGSNSSLSLDSAGAEPMPGEKR). Positions 416 to 425 (NSSLSLDSAG) are enriched in low complexity. Positions 503 to 656 (VIGNSLTPKA…GATLMECELN (154 aa)) constitute an N-acetyltransferase domain. K549 carries the post-translational modification N6-acetyllysine. E575 serves as the catalytic Proton donor/acceptor. Acetyl-CoA contacts are provided by residues 579 to 581 (CAV), 586 to 592 (QVKGYGT), and Y617. Succinyl-CoA is bound by residues 579–581 (CAV), 586–592 (QVKGYGT), and Y617. The interval 639–648 (LGYIKDYEGA) is loop 3. K728 is covalently cross-linked (Glycyl lysine isopeptide (Lys-Gly) (interchain with G-Cter in SUMO2)). In terms of domain architecture, Bromo spans 728 to 832 (KDPDQLYTTL…KFFYFKLKEG (105 aa)). Phosphothreonine is present on T735. Glycyl lysine isopeptide (Lys-Gly) (interchain with G-Cter in SUMO2) cross-links involve residues K759 and K791.

It belongs to the acetyltransferase family. GCN5 subfamily. Homooligomer; may form a tetramer of homodimers. Interacts with EP300, CREBBP and ADA2. Component of the TFTC-HAT complex, at least composed of TAF5L, TAF6L, TAF3, TADA3L, SUPT3H/SPT3, TAF2/TAFII150, TAF4/TAFII135, TAF5/TAFII100, KAT2A/GCN5L2, TAF10 and TRRAP. Component of the STAGA transcription coactivator-HAT complex, at least composed of SUPT3H, KAT2A, SUPT7L, TAF5L, TAF6L, TADA3L, TAD1L, TAF10, TAF12, TRRAP and TAF9. The STAGA core complex is associated with a subcomplex required for histone deubiquitination composed of ATXN7L3, ENY2 and USP22. Component of the ADA2A-containing complex (ATAC), composed of KAT14, KAT2A, TADA2L, TADA3L, ZZ3, MBIP, WDR5, YEATS2, CCDC101 and DR1. In the complex, it probably interacts directly with KAT14, MBIP and WDR5. Interacts with PML. Interacts with CEBPB. Interacts with TACC1, TACC2 and TACC3. Interacts with RELA. Interacts with NFATC2. Interacts with TBX5. Interacts with PLK4. Associates with the 2-oxoglutarate dehydrogenase complex. Interacts with XPC; leading to KAT2A recruitment to promoters and subsequent acetylation of histones. Interacts with ERCC3/XPB; leading to KAT2A recruitment to promoters and subsequent acetylation of histones. Interacts with ISL1. Interactions of ISL1 with MLIP1 or KAT2A may be mutually exclusive. As to quaternary structure, (Microbial infection) Interacts with and acetylates HIV-1 Tat. In terms of processing, acetylated at Lys-549, inhibiting the protein acetyltransferase activity. Deacetylation at Lys-549 by SIRT6 promotes phosphorylation at Ser-307 and Thr-735 and subsequent activation of the protein acetyltransferase activity, leading to acetylation and inactivation of PPARGC1A. As to expression, expressed in all tissues tested.

The protein resides in the nucleus. It localises to the chromosome. It is found in the cytoplasm. Its subcellular location is the cytoskeleton. The protein localises to the microtubule organizing center. The protein resides in the centrosome. The enzyme catalyses L-lysyl-[histone] + acetyl-CoA = N(6)-acetyl-L-lysyl-[histone] + CoA + H(+). It catalyses the reaction L-lysyl-[protein] + acetyl-CoA = N(6)-acetyl-L-lysyl-[protein] + CoA + H(+). The catalysed reaction is succinyl-CoA + L-lysyl-[protein] = N(6)-succinyl-L-lysyl-[protein] + CoA + H(+). It carries out the reaction glutaryl-CoA + L-lysyl-[protein] = N(6)-glutaryl-L-lysyl-[protein] + CoA + H(+). Functionally, protein lysine acyltransferase that can act as a acetyltransferase, glutaryltransferase, succinyltransferase or malonyltransferase, depending on the context. Acts as a histone lysine succinyltransferase: catalyzes succinylation of histone H3 on 'Lys-79' (H3K79succ), with a maximum frequency around the transcription start sites of genes. Succinylation of histones gives a specific tag for epigenetic transcription activation. Association with the 2-oxoglutarate dehydrogenase complex, which provides succinyl-CoA, is required for histone succinylation. In different complexes, functions either as an acetyltransferase (HAT) or as a succinyltransferase: in the SAGA and ATAC complexes, acts as a histone acetyltransferase. Has significant histone acetyltransferase activity with core histones, but not with nucleosome core particles. Has a a strong preference for acetylation of H3 at 'Lys-9' (H3K9ac). Acetylation of histones gives a specific tag for epigenetic transcription activation. Recruited by the XPC complex at promoters, where it specifically mediates acetylation of histone variant H2A.Z.1/H2A.Z, thereby promoting expression of target genes. Involved in long-term memory consolidation and synaptic plasticity: acts by promoting expression of a hippocampal gene expression network linked to neuroactive receptor signaling. Acts as a positive regulator of T-cell activation: upon TCR stimulation, recruited to the IL2 promoter following interaction with NFATC2 and catalyzes acetylation of histone H3 at 'Lys-9' (H3K9ac), leading to promote IL2 expression. Required for growth and differentiation of craniofacial cartilage and bone by regulating acetylation of histone H3 at 'Lys-9' (H3K9ac). Regulates embryonic stem cell (ESC) pluripotency and differentiation. Also acetylates non-histone proteins, such as CEBPB, MRE11, PPARGC1A, PLK4 and TBX5. Involved in heart and limb development by mediating acetylation of TBX5, acetylation regulating nucleocytoplasmic shuttling of TBX5. Acts as a negative regulator of centrosome amplification by mediating acetylation of PLK4. Acts as a negative regulator of gluconeogenesis by mediating acetylation and subsequent inactivation of PPARGC1A. Also acts as a histone glutaryltransferase: catalyzes glutarylation of histone H4 on 'Lys-91' (H4K91glu), a mark that destabilizes nucleosomes by promoting dissociation of the H2A-H2B dimers from nucleosomes. (Microbial infection) In case of HIV-1 infection, it is recruited by the viral protein Tat. Regulates Tat's transactivating activity and may help inducing chromatin remodeling of proviral genes. This Homo sapiens (Human) protein is Histone acetyltransferase KAT2A.